The chain runs to 499 residues: Aspartyl/glutamyl-tRNA(Asn/Gln) amidotransferase subunit B (499 aa).

The protein belongs to the GatB/GatE family. GatB subfamily. In terms of assembly, heterotrimer of A, B and C subunits.

It catalyses the reaction L-glutamyl-tRNA(Gln) + L-glutamine + ATP + H2O = L-glutaminyl-tRNA(Gln) + L-glutamate + ADP + phosphate + H(+). The enzyme catalyses L-aspartyl-tRNA(Asn) + L-glutamine + ATP + H2O = L-asparaginyl-tRNA(Asn) + L-glutamate + ADP + phosphate + 2 H(+). Its function is as follows. Allows the formation of correctly charged Asn-tRNA(Asn) or Gln-tRNA(Gln) through the transamidation of misacylated Asp-tRNA(Asn) or Glu-tRNA(Gln) in organisms which lack either or both of asparaginyl-tRNA or glutaminyl-tRNA synthetases. The reaction takes place in the presence of glutamine and ATP through an activated phospho-Asp-tRNA(Asn) or phospho-Glu-tRNA(Gln). In Salinispora arenicola (strain CNS-205), this protein is Aspartyl/glutamyl-tRNA(Asn/Gln) amidotransferase subunit B.